The chain runs to 224 residues: Large ribosomal subunit protein uL11c (224 aa).

The N-terminal 66 residues, 1–66 (MAQPLVAAPS…SHRRLSIVAM (66 aa)), are a transit peptide targeting the chloroplast. Lysine 75 and lysine 111 each carry N6,N6,N6-trimethyllysine.

Component of the chloroplast large ribosomal subunit (LSU). Mature 70S chloroplast ribosomes of higher plants consist of a small (30S) and a large (50S) subunit. The 30S small subunit contains 1 molecule of ribosomal RNA (16S rRNA) and 24 different proteins. The 50S large subunit contains 3 rRNA molecules (23S, 5S and 4.5S rRNA) and 33 different proteins.

It is found in the plastid. The protein localises to the chloroplast. Component of the chloroplast ribosome (chloro-ribosome), a dedicated translation machinery responsible for the synthesis of chloroplast genome-encoded proteins, including proteins of the transcription and translation machinery and components of the photosynthetic apparatus. This chain is Large ribosomal subunit protein uL11c (rpl11), found in Spinacia oleracea (Spinach).